The chain runs to 417 residues: Putative competence-damage inducible protein (417 aa).

It belongs to the CinA family.

This chain is Putative competence-damage inducible protein, found in Oceanobacillus iheyensis (strain DSM 14371 / CIP 107618 / JCM 11309 / KCTC 3954 / HTE831).